Consider the following 154-residue polypeptide: Myoglobin (154 aa).

One can recognise a Globin domain in the interval 2 to 148 (GLSDDEWNHV…FRNDMASKYK (147 aa)). H65 is a nitrite binding site. H65 contacts O2. A heme b-binding site is contributed by H94.

This sequence belongs to the globin family. In terms of assembly, monomeric.

The protein resides in the cytoplasm. Its subcellular location is the sarcoplasm. The catalysed reaction is Fe(III)-heme b-[protein] + nitric oxide + H2O = Fe(II)-heme b-[protein] + nitrite + 2 H(+). The enzyme catalyses H2O2 + AH2 = A + 2 H2O. Functionally, monomeric heme protein which primary function is to store oxygen and facilitate its diffusion within muscle tissues. Reversibly binds oxygen through a pentacoordinated heme iron and enables its timely and efficient release as needed during periods of heightened demand. Depending on the oxidative conditions of tissues and cells, and in addition to its ability to bind oxygen, it also has a nitrite reductase activity whereby it regulates the production of bioactive nitric oxide. Under stress conditions, like hypoxia and anoxia, it also protects cells against reactive oxygen species thanks to its pseudoperoxidase activity. The protein is Myoglobin (MB) of Caretta caretta (Loggerhead sea turtle).